Here is a 632-residue protein sequence, read N- to C-terminus: tRNA endonuclease VMS1 (632 aa).

The C2H2-type zinc finger occupies 72-96; the sequence is MRCSVCQMSFDSRNEQKAHYQTDYH. The interval 123–155 is disordered; the sequence is HGIKSEDENSGGEQTSSDHEESEEASDRDPDLQ. A VLRF1 domain is found at 232–392; that stretch reads PMAISALFMV…KKAWCELSYL (161 aa). The active site involves glutamine 295. 2 ANK repeats span residues 470–500 and 504–530; these read LTPT…DPTI and LGRT…NLGE. Coiled-coil stretches lie at residues 544 to 582 and 608 to 632; these read LSRE…QRFA and TDEQ…KKKY. Positions 578–589 are enriched in basic and acidic residues; sequence KQRFAKDAERGP. A disordered region spans residues 578 to 632; that stretch reads KQRFAKDAERGPGKKLTNIPSIQQQNLNSLTDEQRRRLMREQRARAAEERMKKKY. The span at 595–608 shows a compositional bias: polar residues; that stretch reads NIPSIQQQNLNSLT. The span at 609–632 shows a compositional bias: basic and acidic residues; the sequence is DEQRRRLMREQRARAAEERMKKKY.

It belongs to the ANKZF1/VMS1 family. Associates with 60S ribosomal subunit. Interacts with CDC48. Interacts with NPL4.

It is found in the cytoplasm. It localises to the mitochondrion. The protein localises to the endoplasmic reticulum membrane. In terms of biological role, endonuclease that cleaves polypeptidyl-tRNAs downstream of the ribosome-associated quality control (RQC) pathway to release incompletely synthesized polypeptides for degradation. The RQC pathway disassembles aberrantly stalled translation complexes to recycle or degrade the constituent parts. VMS1 acts downstream disassembly of stalled ribosomes and specifically cleaves off the terminal 3'-CCA nucleotides universal to all tRNAs from polypeptidyl-tRNAs, releasing (1) ubiquitinated polypeptides from 60S ribosomal subunit for degradation by the ERAD pathway and (2) cleaved tRNAs for recycling. Component of an evolutionarily conserved system for ubiquitin-mediated mitochondria-associated protein degradation (MAD), which is necessary to maintain mitochondrial, cellular, and organismal viability. This Saccharomyces cerevisiae (strain ATCC 204508 / S288c) (Baker's yeast) protein is tRNA endonuclease VMS1.